Consider the following 822-residue polypeptide: AP-1 complex subunit gamma-1 (822 aa).

The disordered stretch occupies residues 597-628 (EIVQTNGETEPAPLETKPPPSGPQPTSQANDL). Residues 702 to 817 (AGIPSITAYS…QDLAEVNNFP (116 aa)) enclose the GAE domain.

The protein belongs to the adaptor complexes large subunit family. Adaptor protein complex 1 (AP-1) is a heterotetramer composed of two large adaptins (gamma-type subunit AP1G1 and beta-type subunit AP1B1), a medium adaptin (mu-type subunit AP1M1 or AP1M2) and a small adaptin (sigma-type subunit AP1S1 or AP1S2 or AP1S3). Interacts (via GAE domain) with RABEP1. Interacts with SYNRG/gamma-synergin. Interacts with EPS15. Interacts (via GAE domain) with AP1AR (via coiled-coil domain). Interacts with CLN3 (via dileucine motif); this interaction facilitates lysosomal targeting. Interacts (via GAE domain) with AFTPH/aftiphilin; the interaction is required to recruit AFTPH/aftiphilin to the perinuclear region of the cell. As to expression, widely expressed.

It localises to the golgi apparatus. It is found in the cytoplasmic vesicle. Its subcellular location is the clathrin-coated vesicle membrane. The protein resides in the cytoplasm. The protein localises to the perinuclear region. It localises to the clathrin-coated vesicle. It is found in the membrane. Its subcellular location is the clathrin-coated pit. Functionally, subunit of clathrin-associated adaptor protein complex 1 that plays a role in protein sorting in the late-Golgi/trans-Golgi network (TGN) and/or endosomes. The AP complexes mediate both the recruitment of clathrin to membranes and the recognition of sorting signals within the cytosolic tails of transmembrane cargo molecules. In association with AFTPH/aftiphilin in the aftiphilin/p200/gamma-synergin complex, involved in the trafficking of transferrin from early to recycling endosomes, and the membrane trafficking of furin and the lysosomal enzyme cathepsin D between the trans-Golgi network (TGN) and endosomes. This chain is AP-1 complex subunit gamma-1 (AP1G1), found in Homo sapiens (Human).